The primary structure comprises 162 residues: Calcium-binding protein 4b (162 aa).

EF-hand domains are found at residues 10 to 45, 46 to 81, 85 to 120, and 123 to 158; these read ELTN…CKYP, NPTL…DYII, TCLK…SGSN, and QAKV…YFEI. The Ca(2+) site is built by Asp-23, Asn-25, Asp-27, Gln-29, Glu-34, Asp-59, Asp-61, Asp-63, Lys-65, and Glu-70. Asp-136, Asp-138, Asp-140, Cys-142, and Glu-147 together coordinate Ca(2+).

This Dictyostelium discoideum (Social amoeba) protein is Calcium-binding protein 4b (cbpD2).